The sequence spans 208 residues: Ribosomal RNA large subunit methyltransferase E (208 aa).

Residues Gly63, Trp65, Asp83, Asp99, and Asp124 each contribute to the S-adenosyl-L-methionine site. The active-site Proton acceptor is Lys164.

The protein belongs to the class I-like SAM-binding methyltransferase superfamily. RNA methyltransferase RlmE family.

The protein localises to the cytoplasm. The enzyme catalyses uridine(2552) in 23S rRNA + S-adenosyl-L-methionine = 2'-O-methyluridine(2552) in 23S rRNA + S-adenosyl-L-homocysteine + H(+). In terms of biological role, specifically methylates the uridine in position 2552 of 23S rRNA at the 2'-O position of the ribose in the fully assembled 50S ribosomal subunit. This is Ribosomal RNA large subunit methyltransferase E from Alcanivorax borkumensis (strain ATCC 700651 / DSM 11573 / NCIMB 13689 / SK2).